A 511-amino-acid chain; its full sequence is Anthranilate synthase component 1 (511 aa).

The interval 1–36 (MTTHAAEAPTTDPQGAPGSQKTPDATEAEEAARATV) is disordered. The span at 11 to 23 (TDPQGAPGSQKTP) shows a compositional bias: polar residues. L-tryptophan contacts are provided by residues serine 84 and 292-294 (PYM). 328 to 329 (GT) contributes to the chorismate binding site. Glutamate 355 contacts Mg(2+). Residues tyrosine 443, arginine 463, 477-479 (GAG), and glycine 479 each bind chorismate. Glutamate 492 serves as a coordination point for Mg(2+).

It belongs to the anthranilate synthase component I family. Heterotetramer consisting of two non-identical subunits: a beta subunit (TrpG) and a large alpha subunit (TrpE). The cofactor is Mg(2+).

It carries out the reaction chorismate + L-glutamine = anthranilate + pyruvate + L-glutamate + H(+). The protein operates within amino-acid biosynthesis; L-tryptophan biosynthesis; L-tryptophan from chorismate: step 1/5. With respect to regulation, feedback inhibited by tryptophan. Its function is as follows. Part of a heterotetrameric complex that catalyzes the two-step biosynthesis of anthranilate, an intermediate in the biosynthesis of L-tryptophan. In the first step, the glutamine-binding beta subunit (TrpG) of anthranilate synthase (AS) provides the glutamine amidotransferase activity which generates ammonia as a substrate that, along with chorismate, is used in the second step, catalyzed by the large alpha subunit of AS (TrpE) to produce anthranilate. In the absence of TrpG, TrpE can synthesize anthranilate directly from chorismate and high concentrations of ammonia. In Streptomyces coelicolor (strain ATCC BAA-471 / A3(2) / M145), this protein is Anthranilate synthase component 1 (trpE).